The primary structure comprises 117 residues: MDWTWSILFLVAAATGTYSQVQLVQSGHEVKQPGASVKVSCKASGYSFTTYGMNWVPQAPGQGLEWMGWFNTYTGNPTYAQGFTGRFVFSMDTSASTAYLQISSLKAEDMAMYYCAR.

The signal sequence occupies residues 1–19; that stretch reads MDWTWSILFLVAAATGTYS. A framework-1 region spans residues 20–44; sequence QVQLVQSGHEVKQPGASVKVSCKAS. The region spanning 20 to 117 is the Ig-like domain; sequence QVQLVQSGHE…EDMAMYYCAR (98 aa). An intrachain disulfide couples cysteine 41 to cysteine 115. Residues 45 to 52 are complementarity-determining-1; it reads GYSFTTYG. The interval 53–69 is framework-2; that stretch reads MNWVPQAPGQGLEWMGW. The tract at residues 70-77 is complementarity-determining-2; the sequence is FNTYTGNP. N-linked (GlcNAc...) asparagine glycosylation occurs at asparagine 76. A framework-3 region spans residues 78–115; that stretch reads TYAQGFTGRFVFSMDTSASTAYLQISSLKAEDMAMYYC. The segment at 116 to 117 is complementarity-determining-3; the sequence is AR.

In terms of assembly, immunoglobulins are composed of two identical heavy chains and two identical light chains; disulfide-linked.

The protein resides in the secreted. The protein localises to the cell membrane. Functionally, probable non-functional open reading frame (ORF) of V region of the variable domain of immunoglobulin heavy chains. Non-functional ORF generally cannot participate in the synthesis of a productive immunoglobulin chain due to altered V-(D)-J or switch recombination and/or splicing site (at mRNA level) and/or conserved amino acid change (protein level). Immunoglobulins, also known as antibodies, are membrane-bound or secreted glycoproteins produced by B lymphocytes. In the recognition phase of humoral immunity, the membrane-bound immunoglobulins serve as receptors which, upon binding of a specific antigen, trigger the clonal expansion and differentiation of B lymphocytes into immunoglobulins-secreting plasma cells. Secreted immunoglobulins mediate the effector phase of humoral immunity, which results in the elimination of bound antigens. The antigen binding site is formed by the variable domain of one heavy chain, together with that of its associated light chain. Thus, each immunoglobulin has two antigen binding sites with remarkable affinity for a particular antigen. The variable domains are assembled by a process called V-(D)-J rearrangement and can then be subjected to somatic hypermutations which, after exposure to antigen and selection, allow affinity maturation for a particular antigen. The sequence is that of Probable non-functional immunoglobulin heavy variable 7-81 from Homo sapiens (Human).